The primary structure comprises 143 residues: HTH-type transcriptional regulator BudR (143 aa).

The 58-residue stretch at 1-58 folds into the HTH lysR-type domain; sequence MELRYLRYFVAVARERHFTRAAKALGISQPPLSQQIKRLEEEVGTPLFRRLTRGVELT. Positions 18 to 37 form a DNA-binding region, H-T-H motif; it reads FTRAAKALGISQPPLSQQIK.

It belongs to the LysR transcriptional regulatory family.

In terms of biological role, regulator of the budABC operon for 2,3-butanediol synthesis. The sequence is that of HTH-type transcriptional regulator BudR (budR) from Klebsiella aerogenes (Enterobacter aerogenes).